Here is a 662-residue protein sequence, read N- to C-terminus: UvrABC system protein B (662 aa).

Residues D31–R188 enclose the Helicase ATP-binding domain. Residue G44–T51 coordinates ATP. A Beta-hairpin motif is present at residues Y97–V120. The 167-residue stretch at Q435 to I601 folds into the Helicase C-terminal domain. One can recognise a UVR domain in the interval K626–L661.

It belongs to the UvrB family. In terms of assembly, forms a heterotetramer with UvrA during the search for lesions. Interacts with UvrC in an incision complex.

It is found in the cytoplasm. Its function is as follows. The UvrABC repair system catalyzes the recognition and processing of DNA lesions. A damage recognition complex composed of 2 UvrA and 2 UvrB subunits scans DNA for abnormalities. Upon binding of the UvrA(2)B(2) complex to a putative damaged site, the DNA wraps around one UvrB monomer. DNA wrap is dependent on ATP binding by UvrB and probably causes local melting of the DNA helix, facilitating insertion of UvrB beta-hairpin between the DNA strands. Then UvrB probes one DNA strand for the presence of a lesion. If a lesion is found the UvrA subunits dissociate and the UvrB-DNA preincision complex is formed. This complex is subsequently bound by UvrC and the second UvrB is released. If no lesion is found, the DNA wraps around the other UvrB subunit that will check the other stand for damage. This is UvrABC system protein B from Streptococcus pneumoniae (strain P1031).